The chain runs to 445 residues: Methylphloroacetophenone oxidase (445 aa).

A helical membrane pass occupies residues 25–45 (VLSIALIGVACAISIRSILYV). Asn51 carries an N-linked (GlcNAc...) asparagine glycan.

The protein belongs to the cytochrome P450 family.

The protein localises to the membrane. Its pathway is secondary metabolite biosynthesis. Its function is as follows. Methylphloroacetophenone oxidase; part of the gene cluster that mediates the biosynthesis of usnic acid, a dibenzofuran lichen product possessing a broad spectrum of biological activities. Two genes, mpas and mpao, comprise the usnic acid biosynthetic gene cluster with a single post-PKS enzyme, the methylphloracetophenone oxidase (mpao). The methylphloroacetophenone synthase (mpas) is a non-reducing polyketide synthase that produces methylphloracetophenone from acetate via a methylated tetraketide intermediate. The methylphloroacetophenone oxidase then carries out the oxidative dimerization of methylphloracetophenone to usnic acid. In Cladonia uncialis (Cup lichen), this protein is Methylphloroacetophenone oxidase.